A 226-amino-acid polypeptide reads, in one-letter code: Ribonuclease HII (226 aa).

The RNase H type-2 domain maps to 29 to 220 (GPVAGVDEAG…VVAAGVRLEQ (192 aa)). 3 residues coordinate a divalent metal cation: aspartate 35, glutamate 36, and aspartate 129.

The protein belongs to the RNase HII family. Mn(2+) serves as cofactor. It depends on Mg(2+) as a cofactor.

It localises to the cytoplasm. The enzyme catalyses Endonucleolytic cleavage to 5'-phosphomonoester.. In terms of biological role, endonuclease that specifically degrades the RNA of RNA-DNA hybrids. The protein is Ribonuclease HII of Rhodococcus erythropolis (strain PR4 / NBRC 100887).